We begin with the raw amino-acid sequence, 510 residues long: NAD(P)H-quinone oxidoreductase subunit 2 B, chloroplastic (510 aa).

A run of 13 helical transmembrane segments spans residues 24–44 (LLLF…GLIL), 57–77 (IPWL…ALLF), 99–119 (IFQF…VEYI), 124–144 (MAIT…MFLC), 149–169 (LITI…LSGY), 183–203 (YLLM…WLYG), 227–247 (PGIS…LSPA), 295–315 (WHLL…LIAI), 323–343 (MLAY…IVGD), 354–374 (YMLF…LFGL), 395–415 (ALSL…AGFF), 418–438 (LYLF…IGLL), and 484–504 (MIVC…IIAI).

The protein belongs to the complex I subunit 2 family. In terms of assembly, NDH is composed of at least 16 different subunits, 5 of which are encoded in the nucleus.

Its subcellular location is the plastid. It is found in the chloroplast thylakoid membrane. The enzyme catalyses a plastoquinone + NADH + (n+1) H(+)(in) = a plastoquinol + NAD(+) + n H(+)(out). The catalysed reaction is a plastoquinone + NADPH + (n+1) H(+)(in) = a plastoquinol + NADP(+) + n H(+)(out). Functionally, NDH shuttles electrons from NAD(P)H:plastoquinone, via FMN and iron-sulfur (Fe-S) centers, to quinones in the photosynthetic chain and possibly in a chloroplast respiratory chain. The immediate electron acceptor for the enzyme in this species is believed to be plastoquinone. Couples the redox reaction to proton translocation, and thus conserves the redox energy in a proton gradient. In Daucus carota (Wild carrot), this protein is NAD(P)H-quinone oxidoreductase subunit 2 B, chloroplastic.